Reading from the N-terminus, the 280-residue chain is F420-dependent methylenetetrahydromethanopterin dehydrogenase (280 aa).

It belongs to the MTD family.

It carries out the reaction 5,10-methylenetetrahydromethanopterin + oxidized coenzyme F420-(gamma-L-Glu)(n) + 2 H(+) = 5,10-methenyl-5,6,7,8-tetrahydromethanopterin + reduced coenzyme F420-(gamma-L-Glu)(n). Its pathway is one-carbon metabolism; methanogenesis from CO(2); 5,10-methylene-5,6,7,8-tetrahydromethanopterin from 5,10-methenyl-5,6,7,8-tetrahydromethanopterin (coenzyme F420 route): step 1/1. Catalyzes the reversible reduction of methenyl-H(4)MPT(+) to methylene-H(4)MPT. The polypeptide is F420-dependent methylenetetrahydromethanopterin dehydrogenase (Methanoculleus marisnigri (strain ATCC 35101 / DSM 1498 / JR1)).